An 88-amino-acid chain; its full sequence is Small ribosomal subunit protein uS19 (88 aa).

The protein belongs to the universal ribosomal protein uS19 family.

Protein S19 forms a complex with S13 that binds strongly to the 16S ribosomal RNA. The chain is Small ribosomal subunit protein uS19 from Chlamydia caviae (strain ATCC VR-813 / DSM 19441 / 03DC25 / GPIC) (Chlamydophila caviae).